The chain runs to 490 residues: Betaine aldehyde dehydrogenase (490 aa).

K(+) is bound at residue Asp93. 150-152 lines the NAD(+) pocket; it reads GAW. Catalysis depends on Lys162, which acts as the Charge relay system. An NAD(+)-binding site is contributed by 176 to 179; sequence KPSE. Val180 lines the K(+) pocket. 230 to 233 contributes to the NAD(+) binding site; the sequence is GIAS. Leu246 lines the K(+) pocket. Glu252 functions as the Proton acceptor in the catalytic mechanism. NAD(+) is bound by residues Gly254, Cys286, and Glu387. Cys286 functions as the Nucleophile in the catalytic mechanism. Cys286 bears the Cysteine sulfenic acid (-SOH) mark. Residues Lys457 and Gly460 each coordinate K(+). Residue Glu464 is the Charge relay system of the active site.

It belongs to the aldehyde dehydrogenase family. As to quaternary structure, dimer of dimers. Requires K(+) as cofactor.

The catalysed reaction is betaine aldehyde + NAD(+) + H2O = glycine betaine + NADH + 2 H(+). It functions in the pathway amine and polyamine biosynthesis; betaine biosynthesis via choline pathway; betaine from betaine aldehyde: step 1/1. In terms of biological role, involved in the biosynthesis of the osmoprotectant glycine betaine. Catalyzes the irreversible oxidation of betaine aldehyde to the corresponding acid. The polypeptide is Betaine aldehyde dehydrogenase (Yersinia pseudotuberculosis serotype O:1b (strain IP 31758)).